An 89-amino-acid chain; its full sequence is Venom peptide BmKAPI (89 aa).

The N-terminal stretch at 1-22 is a signal peptide; it reads MKFVFASFALFVIFLCFSQSLS. 5 disulfides stabilise this stretch: cysteine 28–cysteine 66, cysteine 37–cysteine 62, cysteine 41–cysteine 55, cysteine 46–cysteine 86, and cysteine 68–cysteine 80. A TIL domain is found at 28-86; sequence CRDNEVFDNCISNCGPPRCSNILNTYPCTNLGPLCTPGCKCKDGRVYDNQGRCVLQTEC.

It belongs to the serine protease inhibitor-like (TIL domain-containing) family. As to expression, expressed by the venom gland.

It is found in the secreted. Functionally, serine protease inhibitor. This chain is Venom peptide BmKAPI, found in Olivierus martensii (Manchurian scorpion).